The sequence spans 113 residues: Protein INCREASED RESISTANCE TO MYZUS PERSICAE 1 (113 aa).

The FLZ-type zinc finger occupies 56-100; that stretch reads DFLKTCSLCNRSLCHHRDIYMYRGNNAFCSLECREKQIKLDEKKA.

It belongs to the FLZ family. As to quaternary structure, interacts with KIN10 and KIN11 via its FLZ-type zinc finger domain. Interacts with KINB3 via its N-terminal part. Interacts with GEBP.

It localises to the nucleus. The protein resides in the cytoplasm. In terms of biological role, may act as an adapter to facilitate the interaction of SnRK1 complex with effector proteins, conferring tissue- and stimulus-type specific differences in the SnRK1 regulation pathway. This Arabidopsis thaliana (Mouse-ear cress) protein is Protein INCREASED RESISTANCE TO MYZUS PERSICAE 1.